A 258-amino-acid polypeptide reads, in one-letter code: Retron Ec83 putative HNH endonuclease (258 aa).

Putative HNH endonuclease component of antiviral defense system retron Ec83, composed of a non-coding RNA (ncRNA), a reverse transcriptase (RT), a probable ATPase and this protein. Expression of retron Ec78 confers protection against bacteriophage T2, T4 and T6. At multiplicity of infection (MOI) of 0.02 cultures slow growth when infected with T4 but do not collapse, at MOI 2 cultures enter growth stasis. The chain is Retron Ec83 putative HNH endonuclease from Escherichia coli.